We begin with the raw amino-acid sequence, 139 residues long: Lamprin 0.9 (139 aa).

Residues 1-19 (MAAAIQALLVLALLHLATA) form the signal peptide. Repeat copies occupy residues 42–46 (GGLGY), 47–51 (GGLGY), 52–56 (GGLGV), 57–61 (AGLGV), 62–66 (AGLGY), 67–71 (GGLGY), 92–96 (GGLGY), and 106–110 (GGLGY). Positions 42 to 110 (GGLGYGGLGY…YHHALGGLGY (69 aa)) are 8 X 5 AA approximate repeats.

As to quaternary structure, the polymeric lamprin chains self-aggregate to form fibers and have secondary structures particularly rich in beta-sheets and in beta-turns.

The protein resides in the secreted. Its subcellular location is the extracellular space. It is found in the extracellular matrix. Its function is as follows. Self-aggregating protein that is part of the soluble form of lamprin. This is Lamprin 0.9 from Petromyzon marinus (Sea lamprey).